A 989-amino-acid chain; its full sequence is MNSSAIDADIPPSALAARFAAGPQLHAPEEAEKRLADWLGDVPADLAGAIRSVADRHPHVGVALRSIAEASPYLFDLIRADPARLLGLLRSDPEAGFVALLDRASAAVAAASDEAEVMAVLRKMKAEAALSIALCDIGGLWPVMQVTQALTDLAVNSVQMTLRFLLRQEAARGRIIPPNSDAPEQGSGLVVLAMGKMGAGELNYSSDIDLIVFYDLDAPTLAPDIEPQPFFVRVTQGLSRILQQRRHDGYVFRVDLRLRPDPASTPVALSTVSALNYYEREGRTWERAAMIKARACAGDLVAGEALLGDIAPFVWRKHLDFAALSDVHDMKRQMQTFRGQTEVAVEGHNVKVGRGGIREIEFFAQTQQLIAGGRHPELRVRPTLAALDILAARDWITYQARDELSVAYQFLRRVEHRIQMIADEQTHTLPDSVEAVERFSRFFGYESREAFARDLLAYFDCVQGHYGKLFEGDPTGTVKLPIDYAGGPDDTGLLDHLHGLGYKKPLMVATTLQQWMTGGYRILKVETTQRAFHEFVPMLIEELARAEEPDNAVNAFDRLLQALHRGGRLISLLSQNRDLLTLVALVLGAAPRLGDMLARQPQILDGLIDPRFFGAMPDRAELSARLAATLADAGPYEEFLDRLRLFGQESLFLIGTRILSGTVSTQQASVAFADVAEGIVGTVHDLVSEQFISQYGRIKDQQTAILAMGKLGSREMTASSDLDLILIYDFDHEQPDSDGERSLQGAQYFARFTQRLISAFTTRTNYGVLYDVDMRLRPSGRAGPLASRLDSFAEYQEVEAWTWEHLALTRARVISASPEFRERIEQVIRAVLTRPRDAAIIANDVAEMRHAIAQEKGEDDVWDMKYAAGGMVDIDFIAQYLQLVHAAATPEILGVSTLGAIDNAARLGVLAQSDAEVLRPAARLYHDLTQILRLCVSDKFKPETAGEDLLRVLVRAGDAPDFSSLEARVKETQAEVRAIFNRLIGGDSA.

The interval 1 to 474 (MNSSAIDADI…HYGKLFEGDP (474 aa)) is adenylyl removase. The interval 480–989 (LPIDYAGGPD…FNRLIGGDSA (510 aa)) is adenylyl transferase.

It belongs to the GlnE family. Requires Mg(2+) as cofactor.

The enzyme catalyses [glutamine synthetase]-O(4)-(5'-adenylyl)-L-tyrosine + phosphate = [glutamine synthetase]-L-tyrosine + ADP. The catalysed reaction is [glutamine synthetase]-L-tyrosine + ATP = [glutamine synthetase]-O(4)-(5'-adenylyl)-L-tyrosine + diphosphate. Involved in the regulation of glutamine synthetase GlnA, a key enzyme in the process to assimilate ammonia. When cellular nitrogen levels are high, the C-terminal adenylyl transferase (AT) inactivates GlnA by covalent transfer of an adenylyl group from ATP to specific tyrosine residue of GlnA, thus reducing its activity. Conversely, when nitrogen levels are low, the N-terminal adenylyl removase (AR) activates GlnA by removing the adenylyl group by phosphorolysis, increasing its activity. The regulatory region of GlnE binds the signal transduction protein PII (GlnB) which indicates the nitrogen status of the cell. This Rhodopseudomonas palustris (strain BisB5) protein is Bifunctional glutamine synthetase adenylyltransferase/adenylyl-removing enzyme.